The chain runs to 281 residues: uncharacterized protein (281 aa).

Helical transmembrane passes span 8–28, 97–117, 147–167, and 210–230; these read ALPV…FIWS, LAVA…RGYG, PARI…GLAV, and IASV…IVPA.

The protein to S.pombe bem46 and yeast YNL320w.

It localises to the cell membrane. This is an uncharacterized protein from Mycobacterium tuberculosis (strain CDC 1551 / Oshkosh).